Reading from the N-terminus, the 225-residue chain is Ribonuclease 3 (225 aa).

Residues 5-127 form the RNase III domain; sequence IEKLTRQLGY…IIGAVYLDSD (123 aa). Position 40 (glutamate 40) interacts with Mg(2+). Aspartate 44 is a catalytic residue. Mg(2+) contacts are provided by aspartate 113 and glutamate 116. Residue glutamate 116 is part of the active site. The 71-residue stretch at 154–224 folds into the DRBM domain; sequence DPKTRLQEFL…AELALEQLTN (71 aa).

This sequence belongs to the ribonuclease III family. In terms of assembly, homodimer. Mg(2+) is required as a cofactor.

The protein resides in the cytoplasm. It carries out the reaction Endonucleolytic cleavage to 5'-phosphomonoester.. Functionally, digests double-stranded RNA. Involved in the processing of primary rRNA transcript to yield the immediate precursors to the large and small rRNAs (23S and 16S). Processes some mRNAs, and tRNAs when they are encoded in the rRNA operon. Processes pre-crRNA and tracrRNA of type II CRISPR loci if present in the organism. The sequence is that of Ribonuclease 3 from Vibrio vulnificus (strain CMCP6).